Reading from the N-terminus, the 328-residue chain is MLNEFPIFDYEDIQLIPNKCVIKSRAEADTSVTLGNHTFKLPVVPANMQTILDENVAEQLAKGGYFYIMHRFDEAGRIPFIKRMHDQGLIASISVGVKDYEYDFVSQLKADAPEYITIDIAHGHADSVISMIQHIKKELPDTFVIAGNVGTPEAVRELENAGADATKVGIGPGKVCITKVKTGFGTGGWQLAALRWCAKAARKPIIADGGIRTHGDIAKSIRFGASMIMIGSLFAGHIESPGKTIEVDGEQFKEYYGSASQYQKGAYKNVEGKRILLPAKGHLQDTLTEMEQDLQSAISYAGGRQVADLKHVDYVIVKNSIWNGDASH.

Cys176 acts as the Thioimidate intermediate in catalysis. Position 205–228 (205–228 (IIADGGIRTHGDIAKSIRFGASMI)) interacts with NADP(+).

Belongs to the IMPDH/GMPR family. GuaC type 2 subfamily.

It carries out the reaction IMP + NH4(+) + NADP(+) = GMP + NADPH + 2 H(+). Its function is as follows. Catalyzes the irreversible NADPH-dependent deamination of GMP to IMP. It functions in the conversion of nucleobase, nucleoside and nucleotide derivatives of G to A nucleotides, and in maintaining the intracellular balance of A and G nucleotides. This Streptococcus pneumoniae serotype 2 (strain D39 / NCTC 7466) protein is GMP reductase.